Reading from the N-terminus, the 500-residue chain is Pyruvate kinase 1 (500 aa).

Ser-2 carries the post-translational modification N-acetylserine. 2 positions are modified to phosphoserine: Ser-9 and Ser-16. Phosphothreonine is present on Thr-31. Residue Arg-49 coordinates substrate. K(+)-binding residues include Asn-51 and Ser-53. ATP is bound at residue 51 to 54; that stretch reads NFSH. Ser-70 is modified (phosphoserine). Residues Asp-84 and Thr-85 each coordinate K(+). Residue Arg-91 participates in ATP binding. Residues Lys-119, Lys-124, Lys-161, Lys-164, and Lys-166 each participate in a glycyl lysine isopeptide (Lys-Gly) (interchain with G-Cter in URM1) cross-link. Lys-177 contributes to the ATP binding site. The residue at position 184 (Thr-184) is a Phosphothreonine. Lys-204 is covalently cross-linked (Glycyl lysine isopeptide (Lys-Gly) (interchain with G-Cter in ubiquitin)). At Ser-213 the chain carries Phosphoserine. A substrate-binding site is contributed by Lys-240. A Mn(2+)-binding site is contributed by Glu-242. Residue Lys-255 forms a Glycyl lysine isopeptide (Lys-Gly) (interchain with G-Cter in ubiquitin) linkage. The substrate site is built by Gly-265 and Asp-266. Position 266 (Asp-266) interacts with Mn(2+). A Glycyl lysine isopeptide (Lys-Gly) (interchain with G-Cter in URM1) cross-link involves residue Lys-292. Thr-298 serves as a coordination point for substrate. Ser-316 is modified (phosphoserine). Residue Lys-394 forms a Glycyl lysine isopeptide (Lys-Gly) (interchain with G-Cter in URM1) linkage. 402 to 407 is a beta-D-fructose 1,6-bisphosphate binding site; that stretch reads STSGTT. Residue Cys-418 is modified to Cysteine persulfide. Lys-446 participates in a covalent cross-link: Glycyl lysine isopeptide (Lys-Gly) (interchain with G-Cter in ubiquitin); alternate. Lys-446 participates in a covalent cross-link: Glycyl lysine isopeptide (Lys-Gly) (interchain with G-Cter in URM1); alternate. A Phosphoserine modification is found at Ser-450. Beta-D-fructose 1,6-bisphosphate-binding residues include Trp-452 and Arg-459. At Thr-478 the chain carries Phosphothreonine. Gly-484 lines the beta-D-fructose 1,6-bisphosphate pocket.

This sequence belongs to the pyruvate kinase family. As to quaternary structure, homotetramer. Mg(2+) serves as cofactor. It depends on K(+) as a cofactor. Post-translationally, conjugated to URM1, a ubiquitin-like protein, in response to oxidative stresses. The attachment of URM1 to lysine residues exclusively depends on the presence of a peroxidatic cysteine in the target protein, with low specificity for the particular residue, motif, or structural context at which urmylation can occur. The URM1-conjugation reaction is mechanistically and directly coupled to the process of cysteine persulfidation, transfering the sulfur atom of the URM1 thiocarboxyl group to redox-active cysteine residues in the target protein if it is exposed to oxidative conditions. In terms of processing, persulfidated on specific redox-active cysteine residues. Persulfidation (also called protein S-sulfhydration) may provide a molecular mechanism that enables cells to protect vulnerable cysteine residues from reactive oxygen species (ROS) under stress conditions.

It catalyses the reaction pyruvate + ATP = phosphoenolpyruvate + ADP + H(+). Its pathway is carbohydrate degradation; glycolysis; pyruvate from D-glyceraldehyde 3-phosphate: step 5/5. Its activity is regulated as follows. The activity is regulated by glucose levels. Activated by fructose-1,6-bisphosphate. The sequence is that of Pyruvate kinase 1 (CDC19) from Saccharomyces cerevisiae (strain ATCC 204508 / S288c) (Baker's yeast).